We begin with the raw amino-acid sequence, 264 residues long: Probable BRI1 kinase inhibitor 1 (264 aa).

Disordered regions lie at residues 1–146 and 165–240; these read MTMN…GLDV and FSRH…SEES. Positions 9 to 30 are enriched in pro residues; that stretch reads RSQPPPPHPPLFKPTTPPPPPL. Over residues 31–40 the composition is skewed to low complexity; sequence LSTSTSTSPP. Polar residues predominate over residues 77–97; that stretch reads LSHNNYSSKANQHRQTGSSSS. Residues 98–107 are compositionally biased toward basic and acidic residues; it reads SKEKDREYKA. Low complexity-rich tracts occupy residues 208-219 and 227-239; these read LSSAPASLRASP and VGGS…SSEE.

As to quaternary structure, interacts with BRI1. Post-translationally, phosphorylated by BRI1.

Its function is as follows. Negative regulator of brassinosteroid signaling. This chain is Probable BRI1 kinase inhibitor 1 (BKI1), found in Oryza sativa subsp. japonica (Rice).